The primary structure comprises 73 residues: Disintegrin trigramin-beta-2 (73 aa).

The Disintegrin domain occupies Glu1–Ala73. 6 cysteine pairs are disulfide-bonded: Cys6–Cys21, Cys8–Cys16, Cys15–Cys38, Cys29–Cys35, Cys34–Cys59, and Cys47–Cys66. The short motif at Arg51 to Asp53 is the Cell attachment site element.

The protein belongs to the venom metalloproteinase (M12B) family. P-II subfamily. P-IIa sub-subfamily. Monomer (disintegrin). Expressed by the venom gland.

The protein resides in the secreted. In terms of biological role, inhibits fibrinogen interaction with platelets. Acts by binding to the alpha-IIb/beta-3 receptor (ITGA2B/ITGB3) on the platelet surface and inhibits aggregation induced by ADP, thrombin, platelet-activating factor and collagen. In Craspedocephalus gramineus (Bamboo pit viper), this protein is Disintegrin trigramin-beta-2.